The following is a 975-amino-acid chain: MSNPKVFEFAKEIGMTPLALMDKIREWHLPVKSHMAELEPEVLEQIKIKLSGGEKSGDEAKPKKTAARKAAPKKAAVAAPVPEADASSAAAKTPVIRRKKDEVPAEAPKAKVVAKPEGEVEEAAAAPKTTRVVVKKPAVKAEAEEVEETPEVEAAAPVEEKAPVKAAVKEEAPAPVEKPEPVVAKEVPAAPVAAAPEAPAPQARKKEVVVGTSGVSSSATPASAPKRNIIGRMDLSRVQSQAPQRPQGERPAGGFTPRAGGEQRGASASFTGQRPGGFNRPAGGAPTRNIRTGFVAANQPPEPIVETGADRGGRDFDKRKRTFGPSAPAAGPAAAGRGAGEKEEVVVSFNAVEFRKREMVFQPKKKKGLLDRDAMKTQITTPSAHKRVVKVNNTMKLSDLAMEMGLKAPQLVRELMKQGVMANMNMDLDFDTIALIVPEFGWEAQNVFKTADEVAEQTAFGDLDAAPVTRPPVVTVMGHVDHGKTSLLDAIRNADVAKGEAGGITQHIGAYSVKIEDGSLITFLDTPGHEAFTAMRARGANATDIAIIVVAADDGMMPQTQEAINHAKAAGVPIIVAVNKIDKPGANPERIKQQLTELEIVPEEWGGSTIFCEVSALKKTGITELLEQIKLVAEVAELKANPKRSGTGLVIEAKMEKGKGPVATLLVKDGTVEVGQYIVAGTMKGRVRSLTNDRGERVQSAGPGIPVEVLGLEAVPAAGDKFDIVKDEVTATKVSELRKEQAEKAAATPAAKLSLDEVFAKVKAGDVKELAIVLKADVHGSLEAINGMLAKLSTPEVKARVIHSAVGGINEGDIVLANTAKGIVLGFNVRPDLGAQAKAKQMGVDVRTYSIVYELIDQMKAAMGGLLSPDIVEEVLGRAEVRNVFTVPKVGTIAGCFVIDGKVQRNASIRLLRENKIVYEGKIASLKRFKDDAKEVASGYECGIGIENYNDVKVGDQMEAFVKKEVARELEGGAN.

Disordered stretches follow at residues 49 to 110 (KLSG…APKA) and 193 to 339 (AAAP…GRGA). Basic residues predominate over residues 63–72 (KKTAARKAAP). Low complexity-rich tracts occupy residues 73-94 (KKAA…AKTP), 193-202 (AAAPEAPAPQ), and 209-225 (VVGT…ASAP). Positions 308–318 (GADRGGRDFDK) are enriched in basic and acidic residues. A compositionally biased stretch (low complexity) spans 324–336 (GPSAPAAGPAAAG). Residues 469-639 (TRPPVVTVMG…KLVAEVAELK (171 aa)) form the tr-type G domain. Residues 478-485 (GHVDHGKT) are G1. 478–485 (GHVDHGKT) lines the GTP pocket. Residues 503 to 507 (GITQH) form a G2 region. The tract at residues 525 to 528 (DTPG) is G3. GTP is bound by residues 525 to 529 (DTPGH) and 579 to 582 (NKID). The tract at residues 579–582 (NKID) is G4. The G5 stretch occupies residues 615–617 (SAL).

This sequence belongs to the TRAFAC class translation factor GTPase superfamily. Classic translation factor GTPase family. IF-2 subfamily.

The protein localises to the cytoplasm. Functionally, one of the essential components for the initiation of protein synthesis. Protects formylmethionyl-tRNA from spontaneous hydrolysis and promotes its binding to the 30S ribosomal subunits. Also involved in the hydrolysis of GTP during the formation of the 70S ribosomal complex. The protein is Translation initiation factor IF-2 of Bdellovibrio bacteriovorus (strain ATCC 15356 / DSM 50701 / NCIMB 9529 / HD100).